A 334-amino-acid chain; its full sequence is L-lactate dehydrogenase B chain (334 aa).

30-58 contributes to the NAD(+) binding site; the sequence is GQVGMACAVSVLLKELADELALVDILEDK. 3 residues coordinate substrate: R107, N139, and R170. N139 provides a ligand contact to NAD(+). H194 serves as the catalytic Proton acceptor. T249 lines the substrate pocket.

It belongs to the LDH/MDH superfamily. LDH family. In terms of assembly, homotetramer.

The protein localises to the cytoplasm. The enzyme catalyses (S)-lactate + NAD(+) = pyruvate + NADH + H(+). It functions in the pathway fermentation; pyruvate fermentation to lactate; (S)-lactate from pyruvate: step 1/1. Interconverts simultaneously and stereospecifically pyruvate and lactate with concomitant interconversion of NADH and NAD(+). This Xenopus laevis (African clawed frog) protein is L-lactate dehydrogenase B chain (ldhb).